The chain runs to 247 residues: 23S rRNA (guanosine-2'-O-)-methyltransferase RlmB (247 aa).

S-adenosyl-L-methionine contacts are provided by G197, I217, and L226.

This sequence belongs to the class IV-like SAM-binding methyltransferase superfamily. RNA methyltransferase TrmH family. RlmB subfamily.

It localises to the cytoplasm. The enzyme catalyses guanosine(2251) in 23S rRNA + S-adenosyl-L-methionine = 2'-O-methylguanosine(2251) in 23S rRNA + S-adenosyl-L-homocysteine + H(+). Functionally, specifically methylates the ribose of guanosine 2251 in 23S rRNA. The protein is 23S rRNA (guanosine-2'-O-)-methyltransferase RlmB of Burkholderia sp.